The primary structure comprises 419 residues: uncharacterized protein (419 aa).

The next 12 helical transmembrane spans lie at 15–35 (RVLM…MPYL), 36–56 (ADYL…VMGV), 77–99 (YKPL…VVAQ), 104–126 (VLIA…RGYL), 140–160 (MFNV…LVLL), 166–186 (ITVL…LVAL), 213–233 (FLTL…IYLA), 246–266 (QYLL…GGQL), 282–302 (LVVG…IPNG), 309–329 (VAVM…AALF), 351–371 (FYST…GSLM), and 377–397 (LNTD…AVAG).

It belongs to the major facilitator superfamily.

The protein resides in the cell membrane. This is an uncharacterized protein from Mycobacterium tuberculosis (strain CDC 1551 / Oshkosh).